The chain runs to 667 residues: DNA ligase (667 aa).

Residues 34–38 (DYEFD), 83–84 (SL), and Glu-117 each bind NAD(+). The active-site N6-AMP-lysine intermediate is the Lys-119. Residues Arg-140, Glu-176, Lys-289, and Lys-313 each contribute to the NAD(+) site. Zn(2+) contacts are provided by Cys-407, Cys-410, Cys-425, and Cys-431. In terms of domain architecture, BRCT spans 591–667 (QVNRNFEGMS…ISEDEFMGMM (77 aa)).

The protein belongs to the NAD-dependent DNA ligase family. LigA subfamily. It depends on Mg(2+) as a cofactor. Requires Mn(2+) as cofactor.

The enzyme catalyses NAD(+) + (deoxyribonucleotide)n-3'-hydroxyl + 5'-phospho-(deoxyribonucleotide)m = (deoxyribonucleotide)n+m + AMP + beta-nicotinamide D-nucleotide.. DNA ligase that catalyzes the formation of phosphodiester linkages between 5'-phosphoryl and 3'-hydroxyl groups in double-stranded DNA using NAD as a coenzyme and as the energy source for the reaction. It is essential for DNA replication and repair of damaged DNA. This Chlorobium chlorochromatii (strain CaD3) protein is DNA ligase.